We begin with the raw amino-acid sequence, 250 residues long: Capsid protein (250 aa).

Positions M1 to K31 are disordered. The Bipartite nuclear localization signal motif lies at K3–S19. The span at S14–K31 shows a compositional bias: polar residues. Positions K34–R48 match the Nuclear localization signal motif. A zinc finger lies at Y53–S70. Positions I95–M116 match the Nuclear export signal motif. The Bipartite nuclear localization signal motif lies at R194–R241.

It belongs to the geminiviridae capsid protein family. Homomultimer. Binds to single-stranded and double-stranded viral DNA. Interacts (via nuclear localization signals) with host importin alpha-1a.

The protein localises to the virion. It localises to the host nucleus. Encapsidates the viral DNA into characteristic twinned ('geminate') particles. Binds the genomic viral ssDNA and shuttles it into and out of the cell nucleus. The CP of bipartite geminiviruses is not required for cell-to-cell or systemic movement. The protein is Capsid protein of Bean golden yellow mosaic virus (isolate Puerto Rico) (BGYMV).